The primary structure comprises 433 residues: Trigger factor (433 aa).

Positions 163-248 constitute a PPIase FKBP-type domain; sequence GDFVTFDFKG…IKEIKVKELP (86 aa).

The protein belongs to the FKBP-type PPIase family. Tig subfamily.

The protein localises to the cytoplasm. The catalysed reaction is [protein]-peptidylproline (omega=180) = [protein]-peptidylproline (omega=0). In terms of biological role, involved in protein export. Acts as a chaperone by maintaining the newly synthesized protein in an open conformation. Functions as a peptidyl-prolyl cis-trans isomerase. In Geotalea uraniireducens (strain Rf4) (Geobacter uraniireducens), this protein is Trigger factor.